Reading from the N-terminus, the 630-residue chain is Probable potassium transport system protein Kup (630 aa).

A run of 12 helical transmembrane segments spans residues 17–37 (LAIA…LYSL), 51–71 (PSAI…VVGI), 105–125 (ITGL…GDAV), 144–164 (PQLS…LFWI), 175–195 (LFGP…VYHI), 218–238 (VLLA…AEAL), 255–275 (YVLV…LLLL), 283–303 (PFFL…STVA), 344–364 (IYVP…VIGF), 374–394 (YGIA…VVMV), 402–422 (LLVA…FGAN), and 428–448 (QGGW…MTWY).

Belongs to the HAK/KUP transporter (TC 2.A.72) family.

It is found in the cell inner membrane. It carries out the reaction K(+)(in) + H(+)(in) = K(+)(out) + H(+)(out). Functionally, transport of potassium into the cell. Likely operates as a K(+):H(+) symporter. This is Probable potassium transport system protein Kup from Burkholderia thailandensis (strain ATCC 700388 / DSM 13276 / CCUG 48851 / CIP 106301 / E264).